The sequence spans 209 residues: MPRKYLESRLEDLQIELDAPALERLEGFLSLLMRWNRAYNLTAARDVETLIDRHLLDSLVVRRYLPAGALADVGSGAGFPGLVLALIEPDRSVTLIDSNGKKTRFLRQCATELGLHRVQVRQARMEALDDGDFAVVTARAVAPLATLIPGTRGLLAPDGALLALKGERIQEELAELPEALVEALDVHELPAIAGQGRACLVACRAAVHL.

S-adenosyl-L-methionine-binding residues include G74, F79, and R139.

Belongs to the methyltransferase superfamily. RNA methyltransferase RsmG family.

It localises to the cytoplasm. It catalyses the reaction guanosine(527) in 16S rRNA + S-adenosyl-L-methionine = N(7)-methylguanosine(527) in 16S rRNA + S-adenosyl-L-homocysteine. Functionally, specifically methylates the N7 position of guanine in position 527 of 16S rRNA. The protein is Ribosomal RNA small subunit methyltransferase G of Halorhodospira halophila (strain DSM 244 / SL1) (Ectothiorhodospira halophila (strain DSM 244 / SL1)).